The sequence spans 260 residues: Thiamine thiazole synthase (260 aa).

NAD(+) contacts are provided by residues A36, 55-56, G63, and 154-156; these read EQ and HVD. Fe cation-binding residues include D156 and H171. M224 is a binding site for NAD(+). R234 serves as a coordination point for glycine.

This sequence belongs to the THI4 family. In terms of assembly, homooctamer; tetramer of dimers. The cofactor is Fe(2+).

The enzyme catalyses hydrogen sulfide + glycine + NAD(+) = ADP-5-ethyl-4-methylthiazole-2-carboxylate + nicotinamide + 3 H2O + H(+). Its pathway is cofactor biosynthesis; thiamine diphosphate biosynthesis. Its function is as follows. Involved in the biosynthesis of the thiazole moiety of thiamine. Catalyzes the conversion of NAD and glycine to adenosine diphosphate 5-(2-hydroxyethyl)-4-methylthiazole-2-carboxylate (ADT), an adenylated thiazole intermediate, using free sulfide as a source of sulfur. This Methanosarcina barkeri (strain Fusaro / DSM 804) protein is Thiamine thiazole synthase.